Consider the following 253-residue polypeptide: Imidazole glycerol phosphate synthase subunit HisF (253 aa).

Active-site residues include D11 and D130.

The protein belongs to the HisA/HisF family. In terms of assembly, heterodimer of HisH and HisF.

It is found in the cytoplasm. The enzyme catalyses 5-[(5-phospho-1-deoxy-D-ribulos-1-ylimino)methylamino]-1-(5-phospho-beta-D-ribosyl)imidazole-4-carboxamide + L-glutamine = D-erythro-1-(imidazol-4-yl)glycerol 3-phosphate + 5-amino-1-(5-phospho-beta-D-ribosyl)imidazole-4-carboxamide + L-glutamate + H(+). It participates in amino-acid biosynthesis; L-histidine biosynthesis; L-histidine from 5-phospho-alpha-D-ribose 1-diphosphate: step 5/9. Functionally, IGPS catalyzes the conversion of PRFAR and glutamine to IGP, AICAR and glutamate. The HisF subunit catalyzes the cyclization activity that produces IGP and AICAR from PRFAR using the ammonia provided by the HisH subunit. The polypeptide is Imidazole glycerol phosphate synthase subunit HisF (Thermoanaerobacter sp. (strain X514)).